Here is a 298-residue protein sequence, read N- to C-terminus: GTP cyclohydrolase FolE2 (298 aa).

This sequence belongs to the GTP cyclohydrolase IV family.

It carries out the reaction GTP + H2O = 7,8-dihydroneopterin 3'-triphosphate + formate + H(+). Its pathway is cofactor biosynthesis; 7,8-dihydroneopterin triphosphate biosynthesis; 7,8-dihydroneopterin triphosphate from GTP: step 1/1. Converts GTP to 7,8-dihydroneopterin triphosphate. The sequence is that of GTP cyclohydrolase FolE2 from Neisseria meningitidis serogroup A / serotype 4A (strain DSM 15465 / Z2491).